The chain runs to 220 residues: Deoxyribose-phosphate aldolase (220 aa).

The active-site Proton donor/acceptor is the D89. K151 functions as the Schiff-base intermediate with acetaldehyde in the catalytic mechanism. K180 acts as the Proton donor/acceptor in catalysis.

Belongs to the DeoC/FbaB aldolase family. DeoC type 1 subfamily.

Its subcellular location is the cytoplasm. It carries out the reaction 2-deoxy-D-ribose 5-phosphate = D-glyceraldehyde 3-phosphate + acetaldehyde. It participates in carbohydrate degradation; 2-deoxy-D-ribose 1-phosphate degradation; D-glyceraldehyde 3-phosphate and acetaldehyde from 2-deoxy-alpha-D-ribose 1-phosphate: step 2/2. Functionally, catalyzes a reversible aldol reaction between acetaldehyde and D-glyceraldehyde 3-phosphate to generate 2-deoxy-D-ribose 5-phosphate. This Deinococcus radiodurans (strain ATCC 13939 / DSM 20539 / JCM 16871 / CCUG 27074 / LMG 4051 / NBRC 15346 / NCIMB 9279 / VKM B-1422 / R1) protein is Deoxyribose-phosphate aldolase.